The primary structure comprises 794 residues: Zinc finger protein 148 (794 aa).

Lys-6 is covalently cross-linked (Glycyl lysine isopeptide (Lys-Gly) (interchain with G-Cter in SUMO2)). Residue Ser-51 is modified to Phosphoserine. Glycyl lysine isopeptide (Lys-Gly) (interchain with G-Cter in SUMO2) cross-links involve residues Lys-88, Lys-115, and Lys-132. A C2H2-type 1 zinc finger spans residues 171–193 (HVCEHCNAAFRTNYHLQRHVFIH). The residue at position 194 (Thr-194) is a Phosphothreonine. 2 consecutive C2H2-type zinc fingers follow at residues 199–221 (FQCS…EKIH) and 227–249 (FRCD…KRTH). Ser-250 is subject to Phosphoserine. The C2H2-type 4 zinc-finger motif lies at 255-278 (YQCEYCLQYFSRTDRVLKHKRMCH). Lys-291 participates in a covalent cross-link: Glycyl lysine isopeptide (Lys-Gly) (interchain with G-Cter in SUMO2). The disordered stretch occupies residues 298-346 (EEDSGFSTSPKDNSLPKKKRQKPEKKSSGMDKESVLDKSDTKKDRNDYL). Ser-301 and Ser-306 each carry phosphoserine. Lys-308 participates in a covalent cross-link: Glycyl lysine isopeptide (Lys-Gly) (interchain with G-Cter in SUMO2). Positions 321–344 (EKKSSGMDKESVLDKSDTKKDRND) are enriched in basic and acidic residues. A Glycyl lysine isopeptide (Lys-Gly) (interchain with G-Cter in SUMO1); alternate cross-link involves residue Lys-356. Residue Lys-356 forms a Glycyl lysine isopeptide (Lys-Gly) (interchain with G-Cter in SUMO2); alternate linkage. Lys-402 is covalently cross-linked (Glycyl lysine isopeptide (Lys-Gly) (interchain with G-Cter in SUMO2)). At Ser-412 the chain carries Phosphoserine. Residues Lys-421 and Lys-424 each participate in a glycyl lysine isopeptide (Lys-Gly) (interchain with G-Cter in SUMO2) cross-link. A compositionally biased stretch (polar residues) spans 574–588 (NSSDVPEVTQSENVG). A disordered region spans residues 574–596 (NSSDVPEVTQSENVGSSSQASSS). At Lys-607 the chain carries N6-acetyllysine. 2 positions are modified to phosphoserine: Ser-665 and Ser-784.

The protein belongs to the krueppel C2H2-type zinc-finger protein family. As to quaternary structure, interacts with HNRNPDL. Interacts with the 5FMC complex; the interaction requires association with CHTOP. Interacts with CAVIN1. Post-translationally, sumoylated with SUMO2. Desumoylated by SENP3, resulting in the stimulation of transcription of its target genes. Expressed in heart, lung, kidney, skeletal muscle, liver, brain and spleen.

Its subcellular location is the nucleus. Its function is as follows. Involved in transcriptional regulation. Represses the transcription of a number of genes including gastrin, stromelysin and enolase. Binds to the G-rich box in the enhancer region of these genes. This Rattus norvegicus (Rat) protein is Zinc finger protein 148 (Znf148).